A 261-amino-acid polypeptide reads, in one-letter code: Sepiapterin reductase (261 aa).

Methionine 1 carries the N-acetylmethionine modification. Residue 14–20 (GASRGFG) coordinates NADP(+). The residue at position 32 (serine 32) is a Phosphoserine. Residues 42–43 (RN) and 69–70 (DL) contribute to the NADP(+) site. Phosphoserine is present on serine 103. Residues 157–158 (SL) and tyrosine 170 each bind substrate. NADP(+) is bound at residue lysine 174. Glycine 199 contributes to the substrate binding site. Residue 201-206 (LDTDMQ) participates in NADP(+) binding. Serine 213 is subject to Phosphoserine; by CaMK2; in vitro. Aspartate 257 is a binding site for substrate.

Belongs to the sepiapterin reductase family. Homodimer. Post-translationally, in vitro phosphorylation of Ser-213 by CaMK2 does not change kinetic parameters.

It localises to the cytoplasm. It carries out the reaction L-erythro-7,8-dihydrobiopterin + NADP(+) = L-sepiapterin + NADPH + H(+). It catalyses the reaction (6R)-L-erythro-5,6,7,8-tetrahydrobiopterin + 2 NADP(+) = 6-pyruvoyl-5,6,7,8-tetrahydropterin + 2 NADPH + 2 H(+). Functionally, catalyzes the final one or two reductions in tetra-hydrobiopterin biosynthesis to form 5,6,7,8-tetrahydrobiopterin. This Homo sapiens (Human) protein is Sepiapterin reductase (SPR).